We begin with the raw amino-acid sequence, 500 residues long: MLIFEHSRPGRRNYSQSPKAAEATDIPEKLLRKTLPLLPEVSEMDAVRHYTRLSQKNFSIDTHFYPLGSCTMKYNPRACNSLAMLPQFLARHPRSPESTGQGFLACMYELQEILKDVTGMAGVSLTPMAGAQGELIGIAMIRAYHESRGDTARTEIIVPDAAHGTNPATAVMCGYKVVEIATDKEGNVDMAALKAAVGPKTAGLMLTNPSTLGVFEENVAEMSRIVHQAGGLLYYDGANLNAILGKVKPGDMGFDVIHINLHKTFSTPHGGGGPGSAPVGVAPRLLPFMPVPIVAFENGTYRWQTEKDIPQSIGRLSAHMGNAGVLLRAYVYVRLLGAEGMHRVAEFAALNANYLMAELRKAGFEIAYPNRRASHEFIVTLKDLKEKTGVTAMNLAKRLLDKGYHAPTTYFPLLVPECLLIEPAETESKETLDAFVTAMKEILEETRTQPDLVKSAPHTTPVRRLDDVKAARELDLAWKAPTRNITRTETLTPIPTVSVA.

Positions 1–25 are disordered; that stretch reads MLIFEHSRPGRRNYSQSPKAAEATD. Residue lysine 263 is modified to N6-(pyridoxal phosphate)lysine.

This sequence belongs to the GcvP family. C-terminal subunit subfamily. As to quaternary structure, the glycine cleavage system is composed of four proteins: P, T, L and H. In this organism, the P 'protein' is a heterodimer of two subunits. Pyridoxal 5'-phosphate is required as a cofactor.

The catalysed reaction is N(6)-[(R)-lipoyl]-L-lysyl-[glycine-cleavage complex H protein] + glycine + H(+) = N(6)-[(R)-S(8)-aminomethyldihydrolipoyl]-L-lysyl-[glycine-cleavage complex H protein] + CO2. Its function is as follows. The glycine cleavage system catalyzes the degradation of glycine. The P protein binds the alpha-amino group of glycine through its pyridoxal phosphate cofactor; CO(2) is released and the remaining methylamine moiety is then transferred to the lipoamide cofactor of the H protein. The polypeptide is Probable glycine dehydrogenase (decarboxylating) subunit 2 (Nitrosospira multiformis (strain ATCC 25196 / NCIMB 11849 / C 71)).